The primary structure comprises 387 residues: Mitogen-activated protein kinase homolog MMK1 (387 aa).

Positions 55–340 (KPPIMPIGKG…VEDALAHPYL (286 aa)) constitute a Protein kinase domain. ATP-binding positions include 61-69 (IGKGAYGIV) and Lys-84. Catalysis depends on Asp-181, which acts as the Proton acceptor. Thr-213 is subject to Phosphothreonine. The TXY signature appears at 213–215 (TEY). Tyr-215 bears the Phosphotyrosine mark.

Belongs to the protein kinase superfamily. CMGC Ser/Thr protein kinase family. MAP kinase subfamily. Mg(2+) serves as cofactor. Post-translationally, dually phosphorylated on Thr-213 and Tyr-215, which activates the enzyme. Autophosphorylated. In terms of tissue distribution, roots and stems.

It carries out the reaction L-seryl-[protein] + ATP = O-phospho-L-seryl-[protein] + ADP + H(+). It catalyses the reaction L-threonyl-[protein] + ATP = O-phospho-L-threonyl-[protein] + ADP + H(+). Its activity is regulated as follows. Activated by tyrosine and threonine phosphorylation. In terms of biological role, may play a role in the mitogenic induction of symbiotic root nodules on Alfalfa by Rhizobium signal molecules. In Medicago sativa (Alfalfa), this protein is Mitogen-activated protein kinase homolog MMK1 (MMK1).